The chain runs to 280 residues: uncharacterized protein (280 aa).

Tyr-54 (proton donor) is an active-site residue. His-116 contacts substrate. 194-246 contributes to the NADP(+) binding site; the sequence is SPLMQGQLLDHPVLADIAQTYNKSVAQIILRWDLQHGIITIPKSTKEHRIKEN.

The protein belongs to the aldo/keto reductase family.

This is an uncharacterized protein from Bacillus subtilis (strain 168).